A 393-amino-acid chain; its full sequence is Chorismate synthase (393 aa).

R40 and R46 together coordinate NADP(+). FMN-binding positions include 129–131, 249–250, G301, 316–320, and R342; these read RSS, QA, and KPIPT.

It belongs to the chorismate synthase family. Homotetramer. It depends on FMNH2 as a cofactor.

It catalyses the reaction 5-O-(1-carboxyvinyl)-3-phosphoshikimate = chorismate + phosphate. The protein operates within metabolic intermediate biosynthesis; chorismate biosynthesis; chorismate from D-erythrose 4-phosphate and phosphoenolpyruvate: step 7/7. Catalyzes the anti-1,4-elimination of the C-3 phosphate and the C-6 proR hydrogen from 5-enolpyruvylshikimate-3-phosphate (EPSP) to yield chorismate, which is the branch point compound that serves as the starting substrate for the three terminal pathways of aromatic amino acid biosynthesis. This reaction introduces a second double bond into the aromatic ring system. This chain is Chorismate synthase, found in Geobacter metallireducens (strain ATCC 53774 / DSM 7210 / GS-15).